A 551-amino-acid polypeptide reads, in one-letter code: Delta-selinene synthase TPS7FN (551 aa).

Residues Arg266, Asp303, Asp307, Arg444, and Asp447 each contribute to the (2E,6E)-farnesyl diphosphate site. Residues Asp303 and Asp307 each coordinate Mg(2+). The DDXXD motif signature appears at 303-307; it reads DDIYD. Mg(2+)-binding residues include Asp447, Ser451, and Glu455.

Belongs to the terpene synthase family. Tpsb subfamily. Mg(2+) is required as a cofactor. The cofactor is Mn(2+).

The enzyme catalyses (2E,6E)-farnesyl diphosphate = delta-selinene + diphosphate. It carries out the reaction (2E)-geranyl diphosphate = beta-myrcene + diphosphate. The catalysed reaction is (2E)-geranyl diphosphate = (4S)-limonene + diphosphate. It catalyses the reaction (2E,6E)-farnesyl diphosphate + H2O = selina-6-en-4-ol + diphosphate. It functions in the pathway secondary metabolite biosynthesis; terpenoid biosynthesis. Functionally, involved in sesquiterpene olefins biosynthesis, constituants of cannabinoids and terpenoids-rich resins. Catalyzes mainly the conversion of (2E)-farnesyl diphosphate to delta-selinene, and also produces minor products such as selina-6-en-4-ol. Can also use (2E)-geranyl diphosphate as substrate with low efficiency, producing minor amounts of myrcene and limonene. The sequence is that of Delta-selinene synthase TPS7FN from Cannabis sativa (Hemp).